The primary structure comprises 59 residues: Large ribosomal subunit protein uL30 (59 aa).

Belongs to the universal ribosomal protein uL30 family. As to quaternary structure, part of the 50S ribosomal subunit.

This Haemophilus ducreyi (strain 35000HP / ATCC 700724) protein is Large ribosomal subunit protein uL30.